Consider the following 295-residue polypeptide: Ethanolamine ammonia-lyase small subunit (295 aa).

The adenosylcob(III)alamin site is built by V207, E228, and C258.

It belongs to the EutC family. The basic unit is a heterodimer which dimerizes to form tetramers. The heterotetramers trimerize; 6 large subunits form a core ring with 6 small subunits projecting outwards. Requires adenosylcob(III)alamin as cofactor.

The protein localises to the bacterial microcompartment. It catalyses the reaction ethanolamine = acetaldehyde + NH4(+). Its pathway is amine and polyamine degradation; ethanolamine degradation. Its function is as follows. Catalyzes the deamination of various vicinal amino-alcohols to oxo compounds. Allows this organism to utilize ethanolamine as the sole source of nitrogen and carbon in the presence of external vitamin B12. The protein is Ethanolamine ammonia-lyase small subunit of Escherichia coli O7:K1 (strain IAI39 / ExPEC).